The sequence spans 153 residues: Nucleoside diphosphate kinase 3 (153 aa).

ATP is bound by residues Lys-11, Phe-59, Arg-87, Thr-93, Arg-104, and Asn-114. Catalysis depends on His-117, which acts as the Pros-phosphohistidine intermediate.

This sequence belongs to the NDK family. Homohexamer. The cofactor is Mg(2+).

The protein resides in the plastid. It localises to the chloroplast thylakoid lumen. The enzyme catalyses a 2'-deoxyribonucleoside 5'-diphosphate + ATP = a 2'-deoxyribonucleoside 5'-triphosphate + ADP. The catalysed reaction is a ribonucleoside 5'-diphosphate + ATP = a ribonucleoside 5'-triphosphate + ADP. In terms of biological role, major role in the synthesis of nucleoside triphosphates other than ATP. The ATP gamma phosphate is transferred to the NDP beta phosphate via a ping-pong mechanism, using a phosphorylated active-site intermediate. Shows the highest specificity towards GDP. The chain is Nucleoside diphosphate kinase 3 from Spinacia oleracea (Spinach).